Here is a 1235-residue protein sequence, read N- to C-terminus: MEAADINDDVVHPEVRAHITNLVSALGGYSADDDGSYKLGDEALDVLRDLKKWIRFYDEKTNRMDVARCLAEANLVGGDLLQILTLWPQSETDSKYKARIALACFEVMVPLTWPIEKERAEMTINHHRHMPVLQLAQLGYKRAIINFDAIPILNTAVRVALPSMAMPIGERTPRDQAIIKLILFFLRNVAMIAPPQGVKCEGDETQVSRSATIDAFSYQDIFLTLLTLASNMGEDFRTEDVVIMEIIFHLVKRVDPSSLFVSEKQLNKAKGQELASEMRKEAAMLKSYNKTTTTRHSRFGTMIWVKRADGKMVTVSGQEALLDAKTRERKMDNSKTFRPPRRARKPEMEPKDLGPPVTLDERARQQLRSFVQDFLDSGFNPLFLHVRQSIDREALHALNQHKSQFFYLVAWFLEAERMRRKAKRDESKSTSAAGEEVNSFNLVAAVLQQEMFASMNRALDRSYSDKDWQLLTSVMRCYTQIFLTVQEMSESPNEEDQEIAENTLSRLFYEETTHDLIANIARTYKDQGFEYLDAATELVHTFLRILEGYSKQNVDLQVRSRKRARRKKKAAKAAAAVAAARAAGEEAEDVGVPEDNDADDSGDDEQHAERVTQERKFEFGKFAIRFAPQGVVDTFVAFTKFYRDLNDAQLKRAHRYFYRVAFKLELSIMLFRLDIINLFYNMVQGPEPLDKSSPMFKEWEELSKQIIRKCVKKLQERPALFTELLFSKIGSTTHFLEHGYEKPVTTTTPRPGAELEFKRATERDEQIGIAVSVLIDKQQVEHLQWLKDQLTSAMSERQAWENVDKAMAATTEGAADGEAADERSNKSAPPHITIRPDTEARRTAMFKNPHLRLLMRLVGMERLTPTLDETPDSTWILPGSHTAEAIQDTIDLINKAEFSPPTFEDGGSAEDQLRRKSAAASRRTRAAYDDDEEEIRGFLGDDDDEDFLFAPGGPTARKPDARPQKKRQRKRRREAGSGDEEDEGVSDEVLAARAKKRREKELEKIRKIKSEMYVHASDDETDDERDREFFERERKRQETKDSKFDSMLGALGLSVLSQVNGGEKSAWEAVLDDEPESDESENEGRKNAKRRKKQVASGSEEEQEEEEEEEEEEDSDEELPTKQAKSKTSKRKAAVPSKRPARRPGTAKKRAVVELSDNDEDEDEEEDAMDVDSANERTTRNEAPLPSSPGEGLGRRIDKMAMDDGDEDEDDQPVVAARQRPKARGGFIIDSSDEE.

Disordered regions lie at residues 327-357, 584-610, 812-841, and 897-1235; these read RERKMDNSKTFRPPRRARKPEMEPKDLGPPV, GEEAEDVGVPEDNDADDSGDDEQHAER, EGAADGEAADERSNKSAPPHITIRPDTEAR, and EFSP…SDEE. Residues 585 to 603 are compositionally biased toward acidic residues; the sequence is EEAEDVGVPEDNDADDSGD. Residues 929–947 are compositionally biased toward acidic residues; the sequence is DDDEEEIRGFLGDDDDEDF. The span at 964–973 shows a compositional bias: basic residues; that stretch reads QKKRQRKRRR. Over residues 977–986 the composition is skewed to acidic residues; sequence SGDEEDEGVS. A compositionally biased stretch (basic and acidic residues) spans 999-1044; sequence EKELEKIRKIKSEMYVHASDDETDDERDREFFERERKRQETKDSKF. Acidic residues-rich tracts occupy residues 1070–1081 and 1099–1118; these read VLDDEPESDESE and SEEEQEEEEEEEEEEDSDEE. Residues 1124–1150 are compositionally biased toward basic residues; sequence AKSKTSKRKAAVPSKRPARRPGTAKKR. Positions 1156 to 1170 are enriched in acidic residues; it reads SDNDEDEDEEEDAMD. The segment covering 1193-1202 has biased composition (basic and acidic residues); the sequence is LGRRIDKMAM. Positions 1203-1212 are enriched in acidic residues; sequence DDGDEDEDDQ.

This sequence belongs to the timeless family. As to quaternary structure, component of the fork protection complex (FPC) consisting of tof-1 and csm-3.

The protein localises to the nucleus. In terms of biological role, forms a fork protection complex (FPC) with csm-3 and which is required for chromosome segregation during meiosis and DNA damage repair. FPC coordinates leading and lagging strand synthesis and moves with the replication fork. FPC stabilizes replication forks in a configuration that is recognized by replication checkpoint sensors. This chain is Topoisomerase 1-associated factor 1 (tof-1), found in Neurospora crassa (strain ATCC 24698 / 74-OR23-1A / CBS 708.71 / DSM 1257 / FGSC 987).